A 226-amino-acid chain; its full sequence is tRNA (guanine-N(7)-)-methyltransferase (226 aa).

S-adenosyl-L-methionine is bound by residues D59, E84, and D111. D169 lines the substrate pocket.

Belongs to the class I-like SAM-binding methyltransferase superfamily. TrmB family.

The catalysed reaction is guanosine(46) in tRNA + S-adenosyl-L-methionine = N(7)-methylguanosine(46) in tRNA + S-adenosyl-L-homocysteine. The protein operates within tRNA modification; N(7)-methylguanine-tRNA biosynthesis. Catalyzes the formation of N(7)-methylguanine at position 46 (m7G46) in tRNA. The chain is tRNA (guanine-N(7)-)-methyltransferase from Chloroherpeton thalassium (strain ATCC 35110 / GB-78).